Consider the following 90-residue polypeptide: MNKTQLIDVIADKAELSKTQAKAALESTLAAITESLKEGDAVQLVGFGTFKVNHRAERTGRNPQTGKEIKIAAANVPAFVSGKALKDAVK.

It belongs to the bacterial histone-like protein family. As to quaternary structure, heterodimer of an alpha and a beta chain.

Functionally, histone-like DNA-binding protein which is capable of wrapping DNA to stabilize it, and thus to prevent its denaturation under extreme environmental conditions. The chain is DNA-binding protein HU-alpha (hupA) from Salmonella typhi.